We begin with the raw amino-acid sequence, 363 residues long: Pyrimidine monooxygenase RutA (363 aa).

FMN contacts are provided by residues 49–50 (IK), Asn115, Glu124, 140–141 (RY), and Ser190.

The protein belongs to the NtaA/SnaA/DszA monooxygenase family. RutA subfamily.

It catalyses the reaction uracil + FMNH2 + NADH + O2 = (Z)-3-ureidoacrylate + FMN + NAD(+) + H2O + H(+). It carries out the reaction thymine + FMNH2 + NADH + O2 = (Z)-2-methylureidoacrylate + FMN + NAD(+) + H2O + H(+). In terms of biological role, catalyzes the pyrimidine ring opening between N-3 and C-4 by an unusual flavin hydroperoxide-catalyzed mechanism, adding oxygen atoms in the process to yield ureidoacrylate peracid, that immediately reacts with FMN forming ureidoacrylate and FMN-N(5)-oxide. The FMN-N(5)-oxide reacts spontaneously with NADH to produce FMN. Requires the flavin reductase RutF to regenerate FMN in vivo. This Escherichia coli O6:K15:H31 (strain 536 / UPEC) protein is Pyrimidine monooxygenase RutA.